A 71-amino-acid chain; its full sequence is UPF0435 protein BPUM_0734 (71 aa).

Belongs to the UPF0435 family.

The protein is UPF0435 protein BPUM_0734 of Bacillus pumilus (strain SAFR-032).